We begin with the raw amino-acid sequence, 52 residues long: MNGATSLYDEVIIINKIPPKKIDTKGVATEEVATKKVLLNKLLTTQLLNEPE.

In terms of biological role, identified as a multicopy suppressor of the slow growth phenotype of an rsgA (yjeQ) deletion mutant. The protein is Protein YabQ (yabQ) of Escherichia coli (strain K12).